The primary structure comprises 342 residues: Dihydroorotate dehydrogenase (quinone) (342 aa).

Residues 61-65 (AGLDK) and Thr85 contribute to the FMN site. Lys65 is a binding site for substrate. Position 110 to 114 (110 to 114 (NRMGF)) interacts with substrate. FMN-binding residues include Asn138 and Asn171. Asn171 contributes to the substrate binding site. Residue Ser174 is the Nucleophile of the active site. Residue Asn176 participates in substrate binding. FMN-binding residues include Lys216 and Thr244. 245–246 (NT) lines the substrate pocket. FMN is bound by residues Gly267, Gly296, and 317–318 (YS).

It belongs to the dihydroorotate dehydrogenase family. Type 2 subfamily. In terms of assembly, monomer. FMN serves as cofactor.

It localises to the cell membrane. It catalyses the reaction (S)-dihydroorotate + a quinone = orotate + a quinol. Its pathway is pyrimidine metabolism; UMP biosynthesis via de novo pathway; orotate from (S)-dihydroorotate (quinone route): step 1/1. Functionally, catalyzes the conversion of dihydroorotate to orotate with quinone as electron acceptor. This chain is Dihydroorotate dehydrogenase (quinone), found in Pseudomonas aeruginosa (strain LESB58).